A 239-amino-acid polypeptide reads, in one-letter code: Large ribosomal subunit protein uL2 (239 aa).

The tract at residues 205–224 is disordered; that stretch reads GGHQHCGRPKTVARGTSPGR.

Belongs to the universal ribosomal protein uL2 family. Part of the 50S ribosomal subunit. Forms a bridge to the 30S subunit in the 70S ribosome.

One of the primary rRNA binding proteins. Required for association of the 30S and 50S subunits to form the 70S ribosome, for tRNA binding and peptide bond formation. It has been suggested to have peptidyltransferase activity; this is somewhat controversial. Makes several contacts with the 16S rRNA in the 70S ribosome. This is Large ribosomal subunit protein uL2 from Methanoculleus marisnigri (strain ATCC 35101 / DSM 1498 / JR1).